A 629-amino-acid chain; its full sequence is tRNA uridine 5-carboxymethylaminomethyl modification enzyme MnmG (629 aa).

Residues 15 to 20, valine 127, and serine 182 each bind FAD; that span reads GAGHAG. The disordered stretch occupies residues 203–227; the sequence is TPPRVKSSTIDYSKTEEQPGDDHPR. Over residues 215 to 227 the composition is skewed to basic and acidic residues; it reads SKTEEQPGDDHPR. 274–288 lines the NAD(+) pocket; the sequence is GARYCPSIEDKIVRF. An FAD-binding site is contributed by glutamine 371.

Belongs to the MnmG family. In terms of assembly, homodimer. Heterotetramer of two MnmE and two MnmG subunits. FAD serves as cofactor.

The protein localises to the cytoplasm. Functionally, NAD-binding protein involved in the addition of a carboxymethylaminomethyl (cmnm) group at the wobble position (U34) of certain tRNAs, forming tRNA-cmnm(5)s(2)U34. This chain is tRNA uridine 5-carboxymethylaminomethyl modification enzyme MnmG, found in Listeria welshimeri serovar 6b (strain ATCC 35897 / DSM 20650 / CCUG 15529 / CIP 8149 / NCTC 11857 / SLCC 5334 / V8).